The chain runs to 141 residues: Putative nickel-responsive regulator (141 aa).

Ni(2+)-binding residues include His-80, His-91, His-93, and Cys-99.

Belongs to the transcriptional regulatory CopG/NikR family. Ni(2+) is required as a cofactor.

In terms of biological role, transcriptional regulator. In Methanococcus maripaludis (strain C7 / ATCC BAA-1331), this protein is Putative nickel-responsive regulator.